The following is a 413-amino-acid chain: Probable tRNA sulfurtransferase (413 aa).

The THUMP domain maps to 61–171 (TRVLDRVTRV…EDGTYIFTEK (111 aa)). Residues 189 to 190 (ML), 214 to 215 (HF), R275, G297, and Q306 contribute to the ATP site.

This sequence belongs to the ThiI family.

Its subcellular location is the cytoplasm. It catalyses the reaction [ThiI sulfur-carrier protein]-S-sulfanyl-L-cysteine + a uridine in tRNA + 2 reduced [2Fe-2S]-[ferredoxin] + ATP + H(+) = [ThiI sulfur-carrier protein]-L-cysteine + a 4-thiouridine in tRNA + 2 oxidized [2Fe-2S]-[ferredoxin] + AMP + diphosphate. It carries out the reaction [ThiS sulfur-carrier protein]-C-terminal Gly-Gly-AMP + S-sulfanyl-L-cysteinyl-[cysteine desulfurase] + AH2 = [ThiS sulfur-carrier protein]-C-terminal-Gly-aminoethanethioate + L-cysteinyl-[cysteine desulfurase] + A + AMP + 2 H(+). It functions in the pathway cofactor biosynthesis; thiamine diphosphate biosynthesis. Functionally, catalyzes the ATP-dependent transfer of a sulfur to tRNA to produce 4-thiouridine in position 8 of tRNAs, which functions as a near-UV photosensor. Also catalyzes the transfer of sulfur to the sulfur carrier protein ThiS, forming ThiS-thiocarboxylate. This is a step in the synthesis of thiazole, in the thiamine biosynthesis pathway. The sulfur is donated as persulfide by IscS. The protein is Probable tRNA sulfurtransferase of Natranaerobius thermophilus (strain ATCC BAA-1301 / DSM 18059 / JW/NM-WN-LF).